The primary structure comprises 186 residues: MNYCPRPKYLYKKKIINKLIEKFNYKSVMQVPKLKKIVINQGINVLIYDNKTINNAINNITAITGQKAIYCLSKRDESGFKLRKGTPISIKVTLRRDIMYEFLDRLINIALPRVRDFVGVNKNSFDGEGNYNLGISEQIIFPEINTDSLKNNFGMNITFVTSSKKNKEAKYLLYLFGLPFKTKKNV.

The protein belongs to the universal ribosomal protein uL5 family. Part of the 50S ribosomal subunit; part of the 5S rRNA/L5/L18/L25 subcomplex. Contacts the 5S rRNA and the P site tRNA. Forms a bridge to the 30S subunit in the 70S ribosome.

Functionally, this is one of the proteins that bind and probably mediate the attachment of the 5S RNA into the large ribosomal subunit, where it forms part of the central protuberance. In the 70S ribosome it contacts protein S13 of the 30S subunit (bridge B1b), connecting the 2 subunits; this bridge is implicated in subunit movement. Contacts the P site tRNA; the 5S rRNA and some of its associated proteins might help stabilize positioning of ribosome-bound tRNAs. The polypeptide is Large ribosomal subunit protein uL5 (Karelsulcia muelleri (strain GWSS) (Sulcia muelleri)).